Reading from the N-terminus, the 341-residue chain is THO complex subunit 6 homolog (341 aa).

7 WD repeats span residues 22–61 (RLHM…SSEA), 74–112 (AHDG…GCKE), 124–165 (LEVP…RALR), 166–205 (GHTD…EVQT), 215–254 (SRPH…PTTV), 256–293 (PIRA…KAQV), and 295–339 (GSSP…AFSL). The residue at position 180 (Ser-180) is a Phosphoserine.

Belongs to the WD repeat THOC6 family. As to quaternary structure, component of the THO subcomplex, which is composed of THOC1, THOC2, THOC3, THOC5, THOC6 and THOC7. The THO subcomplex interacts with DDX39B to form the THO-DDX39B complex which multimerizes into a 28-subunit tetrameric assembly. Component of the transcription/export (TREX) complex at least composed of ALYREF/THOC4, DDX39B, SARNP/CIP29, CHTOP and the THO subcomplex; in the complex interacts with THOC5; together with THOC5 and THOC7, plays a key structural role in the oligomerization of the THO-DDX39B complex. TREX seems to have a dynamic structure involving ATP-dependent remodeling.

Its subcellular location is the nucleus. It localises to the nucleus speckle. Component of the THO subcomplex of the TREX complex which is thought to couple mRNA transcription, processing and nuclear export, and which specifically associates with spliced mRNA and not with unspliced pre-mRNA. Plays a key structural role in the oligomerization of the THO-DDX39B complex. TREX is recruited to spliced mRNAs by a transcription-independent mechanism, binds to mRNA upstream of the exon-junction complex (EJC) and is recruited in a splicing- and cap-dependent manner to a region near the 5' end of the mRNA where it functions in mRNA export to the cytoplasm via the TAP/NXF1 pathway. Plays a role in apoptosis negative control involved in brain development. This Mus musculus (Mouse) protein is THO complex subunit 6 homolog (Thoc6).